A 175-amino-acid polypeptide reads, in one-letter code: Shikimate kinase (175 aa).

17-22 (GAGKST) is an ATP binding site. Serine 21 contacts Mg(2+). The substrate site is built by aspartate 39, arginine 63, and glycine 85. ATP is bound at residue arginine 123. Arginine 142 lines the substrate pocket. Glutamine 159 provides a ligand contact to ATP.

The protein belongs to the shikimate kinase family. In terms of assembly, monomer. It depends on Mg(2+) as a cofactor.

It is found in the cytoplasm. It carries out the reaction shikimate + ATP = 3-phosphoshikimate + ADP + H(+). Its pathway is metabolic intermediate biosynthesis; chorismate biosynthesis; chorismate from D-erythrose 4-phosphate and phosphoenolpyruvate: step 5/7. In terms of biological role, catalyzes the specific phosphorylation of the 3-hydroxyl group of shikimic acid using ATP as a cosubstrate. This Photobacterium profundum (strain SS9) protein is Shikimate kinase.